A 153-amino-acid polypeptide reads, in one-letter code: Peptide deformylase (153 aa).

Positions 87 and 129 each coordinate Fe cation. Glutamate 130 is an active-site residue. Histidine 133 contacts Fe cation.

It belongs to the polypeptide deformylase family. It depends on Fe(2+) as a cofactor.

It catalyses the reaction N-terminal N-formyl-L-methionyl-[peptide] + H2O = N-terminal L-methionyl-[peptide] + formate. In terms of biological role, removes the formyl group from the N-terminal Met of newly synthesized proteins. Requires at least a dipeptide for an efficient rate of reaction. N-terminal L-methionine is a prerequisite for activity but the enzyme has broad specificity at other positions. The chain is Peptide deformylase from Dictyoglomus thermophilum (strain ATCC 35947 / DSM 3960 / H-6-12).